The primary structure comprises 473 residues: Uronate isomerase (473 aa).

Belongs to the metallo-dependent hydrolases superfamily. Uronate isomerase family.

The catalysed reaction is D-glucuronate = D-fructuronate. It carries out the reaction aldehydo-D-galacturonate = keto-D-tagaturonate. It participates in carbohydrate metabolism; pentose and glucuronate interconversion. The sequence is that of Uronate isomerase (uxaC) from Geobacillus stearothermophilus (Bacillus stearothermophilus).